A 498-amino-acid chain; its full sequence is MAIMRELVDAYFKEHGLIDHQIESYNDFVENRLQKIIDEVGYIETEITGGYKVKLGKIKVGKPVIKEADGSIRPITPMEARIRDLTYSVPLYLEMTPIIGEGEDAREGETVEVYIGELPVMLGSKICHLYGKSREELIDLGEDPEDPFGYFIINGTEKVLITQEDLIPNRILCEKAERSGKIVDVAKVFSTRHGFRALCTVERHPDGLLYATFPGMPGQIPLVILMKALGAETDKDIIESIDDERFFMEIVLNIQEIREEHNINSPEDALEFIGKRVAPGQAKDYRLKRAETVLCNYLLPHLGVTKEDFPKKIRFLGIMARNALELYFGYRGEDDKDHYAYKRAKLAGDLMEDLFRYAFSQLVKDIKYQLERQTLRNKTPSIQAAVRSDILTERIKHAMATGTWVGGKTGVSQLLDRTSYLATNSQLRRIVSPLSRSQPHFEARELHGTHWGKICPSETPEGPNCGLVKNFAIMCKVTREEDDSKVIELLKSFGINVS.

It belongs to the RNA polymerase beta chain family. Part of the RNA polymerase complex.

It is found in the cytoplasm. The enzyme catalyses RNA(n) + a ribonucleoside 5'-triphosphate = RNA(n+1) + diphosphate. Its function is as follows. DNA-dependent RNA polymerase (RNAP) catalyzes the transcription of DNA into RNA using the four ribonucleoside triphosphates as substrates. The Rpo2 subunit (Rpo2N and Rpo2C in this organism) is implicated in DNA promoter recognition and in nucleotide binding. This Methanocaldococcus jannaschii (strain ATCC 43067 / DSM 2661 / JAL-1 / JCM 10045 / NBRC 100440) (Methanococcus jannaschii) protein is DNA-directed RNA polymerase subunit Rpo2N.